Reading from the N-terminus, the 692-residue chain is Non-hemolytic phospholipase C (692 aa).

Residues 1–35 constitute a signal peptide (tat-type signal); it reads MISKSRRSFIRLAAGTVGATVATSMLPSSIQAALA.

This sequence belongs to the bacterial phospholipase C family. Predicted to be exported by the Tat system. The position of the signal peptide cleavage has not been experimentally proven.

The catalysed reaction is a 1,2-diacyl-sn-glycero-3-phosphocholine + H2O = phosphocholine + a 1,2-diacyl-sn-glycerol + H(+). Functionally, hydrolyzes phosphatidylserine as well as phosphatidylcholine. This Pseudomonas aeruginosa (strain ATCC 15692 / DSM 22644 / CIP 104116 / JCM 14847 / LMG 12228 / 1C / PRS 101 / PAO1) protein is Non-hemolytic phospholipase C (plcN).